The primary structure comprises 361 residues: RLA class I histocompatibility antigen, alpha chain 11/11 (361 aa).

Residues 1 to 24 (MGSMAPRTLLLLLAGALTLKDTQA) form the signal peptide. The interval 25–114 (GSHSMRYFYT…ALRYYNQSAA (90 aa)) is alpha-1. Over 25 to 308 (GSHSMRYFYT…EPPAQPTALI (284 aa)) the chain is Extracellular. Asn110 is a glycosylation site (N-linked (GlcNAc...) asparagine). The alpha-2 stretch occupies residues 115–206 (GSHTFQTMFG…EMGKETLQRA (92 aa)). Disulfide bonds link Cys125-Cys188 and Cys227-Cys283. The interval 207-298 (DPPKAHVTHH…GLPEPLTLTW (92 aa)) is alpha-3. Positions 209 to 297 (PKAHVTHHPA…EGLPEPLTLT (89 aa)) constitute an Ig-like C1-type domain. The connecting peptide stretch occupies residues 299–308 (EPPAQPTALI). A helical membrane pass occupies residues 309 to 329 (VGIVAGVLGVLLILGAVVAVV). At 330–361 (RRKKHSSDGKGGRYTPAAGGHRDQGSDDSLMP) the chain is on the cytoplasmic side. Residues 335 to 361 (SSDGKGGRYTPAAGGHRDQGSDDSLMP) are disordered. Residues Ser355 and Ser358 each carry the phosphoserine modification.

This sequence belongs to the MHC class I family. In terms of assembly, heterodimer of an alpha chain and a beta chain (beta-2-microglobulin).

The protein localises to the membrane. Its function is as follows. Involved in the presentation of foreign antigens to the immune system. The chain is RLA class I histocompatibility antigen, alpha chain 11/11 from Oryctolagus cuniculus (Rabbit).